Consider the following 295-residue polypeptide: Very long chain fatty acid elongase 5 (295 aa).

7 consecutive transmembrane segments (helical) span residues 26 to 46, 64 to 84, 112 to 132, 150 to 170, 172 to 192, 207 to 223, and 227 to 247; these read WLLLDNYVPTIFFTALYLFIV, ILVVYNLGLTLLSFYMFYELV, VLWWYYFSKLIEFMDTFFFIL, MLNIWWFVMNWVPCGHSFFGA, LNSFIHVLMYSYYGLSAIPAI, LTQFVLTMTQTTCAMIW, and FPMGWLYFQNSYMISLIILFT. Positions 265–295 are disordered; it reads YQNGSASAVNGYTNSFSSLEDNVKQRKQRQN. Residues 266–284 show a composition bias toward polar residues; sequence QNGSASAVNGYTNSFSSLE.

The protein belongs to the ELO family. ELOVL5 subfamily.

The protein resides in the endoplasmic reticulum membrane. The protein localises to the cell projection. It localises to the dendrite. The catalysed reaction is a very-long-chain acyl-CoA + malonyl-CoA + H(+) = a very-long-chain 3-oxoacyl-CoA + CO2 + CoA. The enzyme catalyses (6Z,9Z,12Z)-octadecatrienoyl-CoA + malonyl-CoA + H(+) = (8Z,11Z,14Z)-3-oxoeicosatrienoyl-CoA + CO2 + CoA. It catalyses the reaction (9Z,12Z,15Z)-octadecatrienoyl-CoA + malonyl-CoA + H(+) = (11Z,14Z,17Z)-3-oxoeicosatrienoyl-CoA + CO2 + CoA. It carries out the reaction (9Z)-hexadecenoyl-CoA + malonyl-CoA + H(+) = 3-oxo-(11Z)-octadecenoyl-CoA + CO2 + CoA. The catalysed reaction is (9Z)-octadecenoyl-CoA + malonyl-CoA + H(+) = 3-oxo-(11Z)-eicosenoyl-CoA + CO2 + CoA. The enzyme catalyses (11Z)-octadecenoyl-CoA + malonyl-CoA + H(+) = 3-oxo-(13Z)-eicosenoyl-CoA + CO2 + CoA. It catalyses the reaction (9Z,12Z)-octadecadienoyl-CoA + malonyl-CoA + H(+) = (11Z,14Z)-3-oxoicosa-11,14-dienoyl-CoA + CO2 + CoA. It carries out the reaction (6Z,9Z,12Z,15Z)-octadecatetraenoyl-CoA + malonyl-CoA + H(+) = (8Z,11Z,14Z,17Z)-3-oxoicosatetraenoyl-CoA + CO2 + CoA. The catalysed reaction is (5Z,8Z,11Z,14Z)-eicosatetraenoyl-CoA + malonyl-CoA + H(+) = (7Z,10Z,13Z,16Z)-3-oxodocosatetraenoyl-CoA + CO2 + CoA. The enzyme catalyses (5Z,8Z,11Z,14Z,17Z)-eicosapentaenoyl-CoA + malonyl-CoA + H(+) = 3-oxo-(7Z,10Z,13Z,16Z,19Z)-docosapentaenoyl-CoA + CO2 + CoA. The protein operates within lipid metabolism; polyunsaturated fatty acid biosynthesis. Functionally, catalyzes the first and rate-limiting reaction of the four reactions that constitute the long-chain fatty acids elongation cycle. This endoplasmic reticulum-bound enzymatic process allows the addition of 2 carbons to the chain of long- and very long-chain fatty acids (VLCFAs) per cycle. Condensing enzyme that acts specifically toward polyunsaturated acyl-CoA with the higher activity toward C18:3(n-6) acyl-CoA. May participate in the production of monounsaturated and of polyunsaturated VLCFAs of different chain lengths that are involved in multiple biological processes as precursors of membrane lipids and lipid mediators. In conditions where the essential linoleic and alpha linoleic fatty acids are lacking it is also involved in the synthesis of Mead acid from oleic acid. This Xenopus laevis (African clawed frog) protein is Very long chain fatty acid elongase 5.